The chain runs to 329 residues: POU domain, class 5, transcription factor 2 (329 aa).

Over residues 1–14 (MAGRRSSNVFPLSG) the composition is skewed to polar residues. The segment at 1–24 (MAGRRSSNVFPLSGNSGGGLEVDT) is disordered. A POU-specific domain is found at 107-181 (DVSAIQKEME…LLKMWLEEVD (75 aa)). The segment at residues 199–258 (RKRRRASRERRIGSNLEKLFLQCPEPTPQQISYIAGRLRLQKDLVQVWFSNRSQMGSWPT) is a DNA-binding region (homeobox).

It belongs to the POU transcription factor family. Class-5 subfamily. In adult brain, expressed in the olfactory bulb, becoming specifically concentrated in the mitral cell layer. Also found in the pyramidal cell layer of the hippocampus, in the granule cell layer of the cerebellum and in the cortex.

Its subcellular location is the nucleus. Functionally, transcription factor that binds preferentially to the octamer motif (5'-ATGTTAAT-3'). May exert a regulatory function in meiotic events that are required for terminal differentiation of male germ cell. The sequence is that of POU domain, class 5, transcription factor 2 (Pou5f2) from Mus musculus (Mouse).